Here is a 154-residue protein sequence, read N- to C-terminus: Ubiquitin-conjugating enzyme E2 L3 (154 aa).

The UBC core domain occupies 2–149 (AASRRLMKEL…AEEFTKKYGE (148 aa)). Residue cysteine 86 is the Glycyl thioester intermediate of the active site. Lysine 131 carries the post-translational modification N6-acetyllysine.

The protein belongs to the ubiquitin-conjugating enzyme family. Interacts with PRKN; involved in ubiquitination and degradation of misfolded proteins. Interacts with UBE3A. Interacts with CCNB1IP1, CBL, ZAP70, RNF19A, RNF19B and RNF144B. Interacts with ARIH1. Interacts with ARIH2 (via RING-type 1). Interacts with NCOA1; they functionally interact to regulate progesterone receptor transcriptional activity. Interacts with NDFIP1 (via N-terminus); the interaction mediates recruitment of UBE2L3 to ITCH and causes MAP3K7 ubiquitination. Post-translationally, ubiquitinated. The alteration of UBE2L3 protein levels during the S-phase of the cell cycle is due to ubiquitin-dependent proteasomal degradation. Autoubiquitinated in vitro.

Its subcellular location is the nucleus. The protein resides in the cytoplasm. The enzyme catalyses S-ubiquitinyl-[E1 ubiquitin-activating enzyme]-L-cysteine + [E2 ubiquitin-conjugating enzyme]-L-cysteine = [E1 ubiquitin-activating enzyme]-L-cysteine + S-ubiquitinyl-[E2 ubiquitin-conjugating enzyme]-L-cysteine.. Its pathway is protein modification; protein ubiquitination. Its function is as follows. Ubiquitin-conjugating enzyme E2 that specifically acts with HECT-type and RBR family E3 ubiquitin-protein ligases. Does not function with most RING-containing E3 ubiquitin-protein ligases because it lacks intrinsic E3-independent reactivity with lysine: in contrast, it has activity with the RBR family E3 enzymes, such as PRKN, RNF31 and ARIH1, that function like RING-HECT hybrids. Accepts ubiquitin from the E1 complex and catalyzes its covalent attachment to other proteins. Mediates ubiquitination by the CUL9-RBX1 complex. In vitro catalyzes 'Lys-11'-linked polyubiquitination. Involved in the selective degradation of short-lived and abnormal proteins. Down-regulated during the S-phase it is involved in progression through the cell cycle. Regulates nuclear hormone receptors transcriptional activity. May play a role in myelopoiesis. This is Ubiquitin-conjugating enzyme E2 L3 (UBE2L3) from Bos taurus (Bovine).